The primary structure comprises 78 residues: Large ribosomal subunit protein bL31 (78 aa).

4 residues coordinate Zn(2+): Cys-16, Cys-18, Cys-38, and Cys-41.

It belongs to the bacterial ribosomal protein bL31 family. Type A subfamily. In terms of assembly, part of the 50S ribosomal subunit. It depends on Zn(2+) as a cofactor.

In terms of biological role, binds the 23S rRNA. The sequence is that of Large ribosomal subunit protein bL31 from Frankia alni (strain DSM 45986 / CECT 9034 / ACN14a).